The following is a 176-amino-acid chain: Ferredoxin-type protein NapF (176 aa).

4Fe-4S ferredoxin-type domains are found at residues 39 to 68 and 71 to 100; these read VENSIFVARCTRCGDCLSVCETNILVKGDA and PEVRFDNGECTFCGKCVDACKQPIFYPRDQ. The [4Fe-4S] cluster site is built by C48, C51, C54, C58, C80, C83, C86, C90, C113, C121, C124, C128, C152, C155, C158, and C162. 4Fe-4S ferredoxin-type domains follow at residues 119–138 and 143–172; these read IECRTCQDNCPANAIRFKLQ and AQPLVNFDACNGCGACVQGCPVNAITMNDL.

It belongs to the NapF family. Interacts with the cytoplasmic NapA precursor. Requires [4Fe-4S] cluster as cofactor.

The protein localises to the cytoplasm. Its function is as follows. Could be involved in the maturation of NapA, the catalytic subunit of the periplasmic nitrate reductase, before its export into the periplasm. The chain is Ferredoxin-type protein NapF from Haemophilus influenzae (strain ATCC 51907 / DSM 11121 / KW20 / Rd).